A 159-amino-acid polypeptide reads, in one-letter code: Ribosomal RNA large subunit methyltransferase H (159 aa).

Residues leucine 76 and glycine 108 each contribute to the S-adenosyl-L-methionine site.

This sequence belongs to the RNA methyltransferase RlmH family. Homodimer.

It localises to the cytoplasm. The enzyme catalyses pseudouridine(1915) in 23S rRNA + S-adenosyl-L-methionine = N(3)-methylpseudouridine(1915) in 23S rRNA + S-adenosyl-L-homocysteine + H(+). Functionally, specifically methylates the pseudouridine at position 1915 (m3Psi1915) in 23S rRNA. The chain is Ribosomal RNA large subunit methyltransferase H from Ligilactobacillus salivarius (strain UCC118) (Lactobacillus salivarius).